We begin with the raw amino-acid sequence, 161 residues long: Small ribosomal subunit protein uS9 (161 aa).

Over residues 1 to 21 (MATLQSLADLNRANTQTSNPE) the composition is skewed to polar residues. The disordered stretch occupies residues 1 to 25 (MATLQSLADLNRANTQTSNPENEAP).

It belongs to the universal ribosomal protein uS9 family.

The polypeptide is Small ribosomal subunit protein uS9 (Methylorubrum populi (strain ATCC BAA-705 / NCIMB 13946 / BJ001) (Methylobacterium populi)).